Reading from the N-terminus, the 216-residue chain is Ribosomal RNA small subunit methyltransferase G (216 aa).

S-adenosyl-L-methionine is bound by residues glycine 73, leucine 78, 124 to 125, and arginine 139; that span reads AE.

This sequence belongs to the methyltransferase superfamily. RNA methyltransferase RsmG family.

The protein localises to the cytoplasm. In terms of biological role, specifically methylates the N7 position of guanine in position 518 of 16S rRNA. The polypeptide is Ribosomal RNA small subunit methyltransferase G (Pseudarthrobacter chlorophenolicus (strain ATCC 700700 / DSM 12829 / CIP 107037 / JCM 12360 / KCTC 9906 / NCIMB 13794 / A6) (Arthrobacter chlorophenolicus)).